A 767-amino-acid chain; its full sequence is Cilium assembly protein DZIP1L (767 aa).

The disordered stretch occupies residues 122–144 (QQRGQQELGRQADELKGVREESR). A compositionally biased stretch (basic and acidic residues) spans 131 to 144 (RQADELKGVREESR). A C2H2-type zinc finger spans residues 166–189 (HTCHLCDKTFMNATFLRGHIQRRH). A coiled-coil region spans residues 205–406 (VEEVLEELRA…SQEEMIQSLS (202 aa)). Ser-426 bears the Phosphoserine mark. The interval 518-767 (SRAKERQENG…SSGQPRVPAW (250 aa)) is disordered. 2 stretches are compositionally biased toward polar residues: residues 533 to 547 (PDGQ…STLV) and 574 to 588 (RQSH…TQVS). Low complexity predominate over residues 607 to 616 (GPGMSTPPFS). Residues 658-675 (ENAQPPGQGSGTLVQSMV) show a composition bias toward polar residues. A compositionally biased stretch (basic and acidic residues) spans 677–686 (NLEKQLEAPA).

This sequence belongs to the DZIP C2H2-type zinc-finger protein family. In terms of assembly, interacts with SEPTIN2.

It localises to the cytoplasm. Its subcellular location is the cytoskeleton. The protein resides in the cilium basal body. It is found in the microtubule organizing center. The protein localises to the centrosome. It localises to the centriole. Involved in primary cilium formation. Probably acts as a transition zone protein required for localization of PKD1/PC1 and PKD2/PC2 to the ciliary membrane. The protein is Cilium assembly protein DZIP1L of Homo sapiens (Human).